A 264-amino-acid polypeptide reads, in one-letter code: Apolipoprotein A-I (264 aa).

The signal sequence occupies residues 1–18 (MRVVVVTLALLFLTGTQA). 2 repeat units span residues 67–88 (LKLA…EDMA) and 89–110 (PYYK…AELT). Residues 67 to 264 (LKLADNLDTL…LLDELQKTVA (198 aa)) form a 10 X approximate tandem repeats region. The 3; half-length repeat unit spans residues 111–121 (KDLEEVKEKIR). 5 consecutive repeat copies span residues 122 to 143 (PFLD…QRLA), 144 to 165 (PVAE…QKLT), 166 to 187 (PVAE…KNLA), 188 to 209 (PYSD…EKGI), and 210 to 231 (PQAA…EKMT). A 9; half-length repeat occupies 232–242 (PLVQDFKERLT). The stretch at 243–264 (PYAENLKTRFISLLDELQKTVA) is repeat 10.

The protein belongs to the apolipoprotein A1/A4/E family. Major protein of plasma HDL, also found in chylomicrons.

The protein resides in the secreted. In terms of biological role, participates in the reverse transport of cholesterol from tissues to the liver for excretion by promoting cholesterol efflux from tissues and by acting as a cofactor for the lecithin cholesterol acyltransferase (LCAT). The chain is Apolipoprotein A-I (APOA1) from Anas platyrhynchos (Mallard).